Consider the following 196-residue polypeptide: Phosphate-specific transport system accessory protein PhoU homolog (196 aa).

The protein belongs to the PhoU family. Homodimer.

Its subcellular location is the cytoplasm. In terms of biological role, plays a role in the regulation of phosphate uptake. This is Phosphate-specific transport system accessory protein PhoU homolog from Archaeoglobus fulgidus (strain ATCC 49558 / DSM 4304 / JCM 9628 / NBRC 100126 / VC-16).